Consider the following 317-residue polypeptide: Coproporphyrinogen-III oxidase, aerobic 1 (317 aa).

The interval 38–47 (VLRDGAIFEQ) is important for dimerization. Position 82 (Ser-82) interacts with substrate. Catalysis depends on His-96, which acts as the Proton donor. Substrate is bound by residues 98–100 (NYR) and 269–274 (NGRTES). Positions 251–286 (YVEFNLVYDRGTIFGLQTNGRTESILMSLPPLVRWE) are important for dimerization.

This sequence belongs to the aerobic coproporphyrinogen-III oxidase family. In terms of assembly, homodimer.

The protein localises to the cytoplasm. The catalysed reaction is coproporphyrinogen III + O2 + 2 H(+) = protoporphyrinogen IX + 2 CO2 + 2 H2O. It participates in porphyrin-containing compound metabolism; protoporphyrin-IX biosynthesis; protoporphyrinogen-IX from coproporphyrinogen-III (O2 route): step 1/1. Key enzyme in heme biosynthesis. Catalyzes the oxidative decarboxylation of propionic acid side chains of rings A and B of coproporphyrinogen III. This chain is Coproporphyrinogen-III oxidase, aerobic 1, found in Nostoc sp. (strain PCC 7120 / SAG 25.82 / UTEX 2576).